We begin with the raw amino-acid sequence, 329 residues long: Helicase VP6-A (329 aa).

Disordered stretches follow at residues 27–130 and 189–232; these read INLV…TNGG and DLRR…SEEP. Basic and acidic residues-rich tracts occupy residues 36–58, 65–83, and 96–109; these read EGGK…KDGE, GQKE…DRRI, and SGER…RGDG. Residue lysine 110 participates in ATP binding. Residues 110–129 show a composition bias toward gly residues; that stretch reads KVGGGGGDADAGVGATGTNG. 2 stretches are compositionally biased toward basic and acidic residues: residues 189 to 207 and 215 to 232; these read DLRR…ERGG and HGDA…SEEP.

The protein belongs to the reoviruses VP6 family. As to quaternary structure, homohexamer.

The protein resides in the virion. It carries out the reaction ATP + H2O = ADP + phosphate + H(+). Functionally, ATP dependent RNA helicase essential for RNA packaging and viral transcription. Possesses ss- and dsRNA-binding capacity. The protein is Helicase VP6-A (Segment-9) of Antilocapra americana (Pronghorn).